Consider the following 347-residue polypeptide: Phosphate acyltransferase (347 aa).

The protein belongs to the PlsX family. Homodimer. Probably interacts with PlsY.

The protein localises to the cytoplasm. The catalysed reaction is a fatty acyl-[ACP] + phosphate = an acyl phosphate + holo-[ACP]. It participates in lipid metabolism; phospholipid metabolism. Catalyzes the reversible formation of acyl-phosphate (acyl-PO(4)) from acyl-[acyl-carrier-protein] (acyl-ACP). This enzyme utilizes acyl-ACP as fatty acyl donor, but not acyl-CoA. The protein is Phosphate acyltransferase of Oleidesulfovibrio alaskensis (strain ATCC BAA-1058 / DSM 17464 / G20) (Desulfovibrio alaskensis).